A 133-amino-acid chain; its full sequence is MAKEFGRPQRVAQEMQKEIAIILQREIKDPRLGMMTTVSGVEMSRDLAYAKVYVTFLNDKDEDAVKAGIKALQEASGFIRTLLGKAMRLRIVPELTFFYDNSLVEGMRMSNLVTNVVKHDEERRVNPDDSKED.

Belongs to the RbfA family. Monomer. Binds 30S ribosomal subunits, but not 50S ribosomal subunits or 70S ribosomes.

It is found in the cytoplasm. One of several proteins that assist in the late maturation steps of the functional core of the 30S ribosomal subunit. Associates with free 30S ribosomal subunits (but not with 30S subunits that are part of 70S ribosomes or polysomes). Required for efficient processing of 16S rRNA. May interact with the 5'-terminal helix region of 16S rRNA. This chain is Ribosome-binding factor A, found in Citrobacter koseri (strain ATCC BAA-895 / CDC 4225-83 / SGSC4696).